A 97-amino-acid polypeptide reads, in one-letter code: Co-chaperonin GroES (97 aa).

Belongs to the GroES chaperonin family. In terms of assembly, heptamer of 7 subunits arranged in a ring. Interacts with the chaperonin GroEL.

Its subcellular location is the cytoplasm. Its function is as follows. Together with the chaperonin GroEL, plays an essential role in assisting protein folding. The GroEL-GroES system forms a nano-cage that allows encapsulation of the non-native substrate proteins and provides a physical environment optimized to promote and accelerate protein folding. GroES binds to the apical surface of the GroEL ring, thereby capping the opening of the GroEL channel. This Klebsiella pneumoniae (strain 342) protein is Co-chaperonin GroES.